The chain runs to 701 residues: Potassium-transporting ATPase ATP-binding subunit 1 (701 aa).

Residues Met-1–Lys-26 form a disordered region. Transmembrane regions (helical) follow at residues Met-57–Phe-77, Gly-90–Ala-110, Val-241–Leu-261, and Ile-278–Ile-298. Asp-329 acts as the 4-aspartylphosphate intermediate in catalysis. ATP contacts are provided by residues Asp-366, Glu-370, Phe-397–Ser-404, and Lys-416. 2 residues coordinate Mg(2+): Asp-539 and Asp-543. 3 consecutive transmembrane segments (helical) span residues Phe-599–Ala-619, Ala-635–Leu-655, and Val-681–Ala-701.

Belongs to the cation transport ATPase (P-type) (TC 3.A.3) family. Type IA subfamily. In terms of assembly, the system is composed of three essential subunits: KdpA, KdpB and KdpC.

It localises to the cell inner membrane. It carries out the reaction K(+)(out) + ATP + H2O = K(+)(in) + ADP + phosphate + H(+). Part of the high-affinity ATP-driven potassium transport (or Kdp) system, which catalyzes the hydrolysis of ATP coupled with the electrogenic transport of potassium into the cytoplasm. This subunit is responsible for energy coupling to the transport system and for the release of the potassium ions to the cytoplasm. This chain is Potassium-transporting ATPase ATP-binding subunit 1, found in Nostoc sp. (strain PCC 7120 / SAG 25.82 / UTEX 2576).